A 116-amino-acid polypeptide reads, in one-letter code: CDKN2AIP N-terminal-like protein (116 aa).

At Met-1 the chain carries N-acetylmethionine. In terms of domain architecture, XRN2-binding (XTBD) spans 24 to 116; that stretch reads AEQFRSYSES…RSELMKKHQS (93 aa).

It belongs to the CARF family. As to quaternary structure, interacts with XRN2; the interaction is direct.

This chain is CDKN2AIP N-terminal-like protein (CDKN2AIPNL), found in Homo sapiens (Human).